We begin with the raw amino-acid sequence, 607 residues long: T-box transcription factor TBX18 (607 aa).

An Engrailed homology 1 repressor motif is present at residues 18–28; the sequence is HAFSVEALIGA. A disordered region spans residues 30–141; sequence KQQQLQKKRR…PLPSPQAPRV (112 aa). The Nuclear localization signal signature appears at 36–40; it reads KKRRK. A compositionally biased stretch (low complexity) spans 44-53; it reads EEAAGAVDDG. The T-box DNA-binding region spans 143-330; it reads LQGAELWKRF…RNPFAKGFRD (188 aa).

Homodimer. Can form a heterodimer with TBX15. Interacts with GATA4 and NKX2-5. Interacts with PAX3. Interacts (via engrailed homology 1 repressor motif) with TLE3; this interaction represses TBX18 transcriptional activity. Interacts with SIX1.

The protein localises to the nucleus. In terms of biological role, acts as a transcriptional repressor involved in developmental processes of a variety of tissues and organs, including the heart and coronary vessels, the ureter and the vertebral column. Required for embryonic development of the sino atrial node (SAN) head area. The protein is T-box transcription factor TBX18 (TBX18) of Homo sapiens (Human).